The chain runs to 94 residues: Small ribosomal subunit protein uS19 (94 aa).

This sequence belongs to the universal ribosomal protein uS19 family.

Protein S19 forms a complex with S13 that binds strongly to the 16S ribosomal RNA. The protein is Small ribosomal subunit protein uS19 of Clostridium novyi (strain NT).